A 337-amino-acid polypeptide reads, in one-letter code: Prenyltransferase terC (337 aa).

Asp111 and Asp115 together coordinate Mg(2+).

The protein belongs to the FPP/GGPP synthase family. The cofactor is Mg(2+).

It participates in secondary metabolite biosynthesis. Its function is as follows. Prenyltransferase; part of the gene cluster that mediates the biosynthesis of terpendoles, indole-diterpene (IDT) mycotoxins including terpendole I, terpendole K, terpendole C, as well as the kinesin Eg5 inhibitor terpendole E. Terpendoles biosynthesis begins with the synthesis of geranylgeranyl diphosphate (GGPP) by a yet unidentified GGPP synthase. Condensation of indole-3-glycerol phosphate with GGPP by the prenyltransferase terC then forms 3-geranylgeranylindole (3-GGI), followed by epoxidation and cyclization of this intermediate (by the FAD-dependent monooxygeanse terM and the terpene cyclase terB) to form paspaline. The cytochrome monooxygenase terQ then hydroxylates paspalline at C-11 to yield terpendole E. The cytochrome monooxygenase terP converts terpendole E to 13-desoxyterpendole I, and terQ converts 13-desoxyterpendole I into terpendole I. TerF and terK are required for conversion of terpendole I to terpendole C which is further converted to terpendole K. The sequence is that of Prenyltransferase terC from Tolypocladium album (Soil fungus).